Consider the following 197-residue polypeptide: Glycerol-3-phosphate acyltransferase (197 aa).

5 consecutive transmembrane segments (helical) span residues 1 to 21 (MNIL…GFLI), 78 to 98 (LIEV…IWLG), 111 to 131 (MFLA…LIVL), 136 to 155 (FVSL…MFFY), and 159 to 176 (FIHT…LVIW).

Belongs to the PlsY family. In terms of assembly, probably interacts with PlsX.

Its subcellular location is the cell inner membrane. The enzyme catalyses an acyl phosphate + sn-glycerol 3-phosphate = a 1-acyl-sn-glycero-3-phosphate + phosphate. Its pathway is lipid metabolism; phospholipid metabolism. In terms of biological role, catalyzes the transfer of an acyl group from acyl-phosphate (acyl-PO(4)) to glycerol-3-phosphate (G3P) to form lysophosphatidic acid (LPA). This enzyme utilizes acyl-phosphate as fatty acyl donor, but not acyl-CoA or acyl-ACP. In Prochlorococcus marinus (strain MIT 9215), this protein is Glycerol-3-phosphate acyltransferase.